The following is a 112-amino-acid chain: Integration host factor subunit alpha (112 aa).

It belongs to the bacterial histone-like protein family. Heterodimer of an alpha and a beta chain.

Functionally, this protein is one of the two subunits of integration host factor, a specific DNA-binding protein that functions in genetic recombination as well as in transcriptional and translational control. The protein is Integration host factor subunit alpha of Rhizobium etli (strain CIAT 652).